The chain runs to 501 residues: Zinc finger C3HC-type protein 1 (501 aa).

At A2 the chain carries N-acetylalanine. A disordered region spans residues V21–T73. S24 is subject to Phosphoserine. T28 carries the phosphothreonine modification. Residues A54 to S72 are compositionally biased toward polar residues. Phosphoserine is present on residues S58, S62, and S68. Residue T84 is modified to Phosphothreonine. A C3HC-type zinc finger spans residues C102 to C156. The tract at residues S302 to T421 is disordered. S320 and S328 each carry phosphoserine. The span at T326 to E338 shows a compositional bias: polar residues. At T332 the chain carries Phosphothreonine. 7 positions are modified to phosphoserine: S334, S337, S343, S353, S358, S369, and S380. Composition is skewed to polar residues over residues R350–P359 and S369–T383. T383 carries the post-translational modification Phosphothreonine. Phosphoserine is present on S394. The Nuclear localization signal motif lies at P395–R401. Phosphoserine occurs at positions 406 and 482. A compositionally biased stretch (low complexity) spans S406–P420.

As to quaternary structure, interacts with TPR; this interaction mediates ZC3HC1 nuclear envelopes (NE)-association but also required for proper positioning of a substantial amount of TPR at the nuclear basket (NB). In terms of processing, phosphorylated. May also be weakly phosphorylated on Tyr residues.

The protein resides in the nucleus. It is found in the nucleus envelope. Its function is as follows. Required for proper positioning of a substantial amount of TPR at the nuclear basket (NB) through interaction with TPR. The protein is Zinc finger C3HC-type protein 1 (Zc3hc1) of Mus musculus (Mouse).